The primary structure comprises 421 residues: MEF2-activating motif and SAP domain-containing transcriptional regulator (421 aa).

Residues 12-28 (IIRSKFRSVLQLRIHRR) carry the MEF2-binding motif. Disordered stretches follow at residues 104–156 (PPEQ…PPSH), 188–296 (KAML…ASLT), and 322–406 (DQVE…ADLS). In terms of domain architecture, SAP spans 165 to 199 (LEELTVSELRQQLRLRGLPVSGTKAMLLERMRGGT). Residues 191–214 (LLERMRGGTPPRERPKPRREDKEA) show a composition bias toward basic and acidic residues. A transcription activation region spans residues 208-421 (RREDKEAAAP…LLWELLPDPW (214 aa)). The segment covering 230–241 (RLPSTVKASATN) has biased composition (polar residues). Residues 260 to 292 (ASVPAPTPSPALAPTPTPAPVPAPAPAPFPTPP) show a composition bias toward pro residues. Low complexity predominate over residues 347-372 (SPDSEGFSSVFSSSLPSPTSSLSPSP).

Interacts with MEF2C. In terms of tissue distribution, expressed in skeletal muscle, brain, placenta and spleen.

It localises to the nucleus. Transcriptional coactivator. Stimulates the transcriptional activity of MEF2C. Stimulates MYOD1 activity in part via MEF2, resulting in an enhancement of skeletal muscle differentiation. This chain is MEF2-activating motif and SAP domain-containing transcriptional regulator (Mamstr), found in Mus musculus (Mouse).